The following is a 902-amino-acid chain: Serine/threonine-protein kinase cbk1 (902 aa).

Disordered stretches follow at residues Met1 to Lys22, Glu97 to Ala154, and Gln207 to Pro288. The segment covering Glu97–Asn118 has biased composition (basic and acidic residues). Residues Arg125–Ser134 show a composition bias toward polar residues. 2 stretches are compositionally biased toward basic and acidic residues: residues Gln142–Ala154 and Met210–Ser221. Over residues Ser222 to Thr239 the composition is skewed to low complexity. The segment covering Ala240–Pro259 has biased composition (polar residues). Residues Lys264 to Glu274 are compositionally biased toward basic and acidic residues. One can recognise a Protein kinase domain in the interval Phe378 to Ile732. ATP contacts are provided by residues Leu384–Val392 and Lys432. The active-site Proton acceptor is Asp527. The 61-residue stretch at Arg771–Gly831 folds into the AGC-kinase C-terminal domain. Residues Tyr797–Asp806 are compositionally biased toward basic and acidic residues. The interval Tyr797–Ala875 is disordered. Acidic residues predominate over residues Arg807–Gly818. The segment covering His833–Val843 has biased composition (basic and acidic residues).

It belongs to the protein kinase superfamily. STE Ser/Thr protein kinase family. COT1 subfamily.

The enzyme catalyses L-seryl-[protein] + ATP = O-phospho-L-seryl-[protein] + ADP + H(+). It carries out the reaction L-threonyl-[protein] + ATP = O-phospho-L-threonyl-[protein] + ADP + H(+). Functionally, protein kinase that seems to play a role in the regulation of cell morphogenesis and proliferation. The chain is Serine/threonine-protein kinase cbk1 (cbk1) from Emericella nidulans (strain FGSC A4 / ATCC 38163 / CBS 112.46 / NRRL 194 / M139) (Aspergillus nidulans).